The following is a 139-amino-acid chain: Putative nickel-responsive regulator (139 aa).

Residues His79, His90, His92, and Cys98 each coordinate Ni(2+).

This sequence belongs to the transcriptional regulatory CopG/NikR family. Ni(2+) is required as a cofactor.

Functionally, transcriptional regulator. The chain is Putative nickel-responsive regulator from Geobacter sp. (strain M21).